The following is a 324-amino-acid chain: tRNA N6-adenosine threonylcarbamoyltransferase (324 aa).

Fe cation contacts are provided by His107, His111, and Tyr127. Residues 127 to 131, Asp159, Gly172, Glu176, and Asn257 contribute to the substrate site; that span reads YVSGG. Asp285 contacts Fe cation.

It belongs to the KAE1 / TsaD family. As to quaternary structure, monomer. Component of the KEOPS complex that consists of Kae1, Bud32, Cgi121 and Pcc1; the whole complex dimerizes. The cofactor is Fe(2+).

It is found in the cytoplasm. It catalyses the reaction L-threonylcarbamoyladenylate + adenosine(37) in tRNA = N(6)-L-threonylcarbamoyladenosine(37) in tRNA + AMP + H(+). Functionally, required for the formation of a threonylcarbamoyl group on adenosine at position 37 (t(6)A37) in tRNAs that read codons beginning with adenine. Is a component of the KEOPS complex that is probably involved in the transfer of the threonylcarbamoyl moiety of threonylcarbamoyl-AMP (TC-AMP) to the N6 group of A37. Kae1 likely plays a direct catalytic role in this reaction, but requires other protein(s) of the complex to fulfill this activity. In vitro, binds tRNA, ssRNA, both single- and double-stranded DNA, and exhibits a low ATPase activity. This is tRNA N6-adenosine threonylcarbamoyltransferase from Pyrococcus abyssi (strain GE5 / Orsay).